The sequence spans 310 residues: Lipoyl synthase (310 aa).

Positions 51, 56, 62, 77, 81, 84, and 290 each coordinate [4Fe-4S] cluster. The Radical SAM core domain occupies 63–280; that stretch reads WSRKTATYLA…RRVGESLGLF (218 aa).

This sequence belongs to the radical SAM superfamily. Lipoyl synthase family. [4Fe-4S] cluster is required as a cofactor.

It localises to the cytoplasm. It catalyses the reaction [[Fe-S] cluster scaffold protein carrying a second [4Fe-4S](2+) cluster] + N(6)-octanoyl-L-lysyl-[protein] + 2 oxidized [2Fe-2S]-[ferredoxin] + 2 S-adenosyl-L-methionine + 4 H(+) = [[Fe-S] cluster scaffold protein] + N(6)-[(R)-dihydrolipoyl]-L-lysyl-[protein] + 4 Fe(3+) + 2 hydrogen sulfide + 2 5'-deoxyadenosine + 2 L-methionine + 2 reduced [2Fe-2S]-[ferredoxin]. It functions in the pathway protein modification; protein lipoylation via endogenous pathway; protein N(6)-(lipoyl)lysine from octanoyl-[acyl-carrier-protein]: step 2/2. Its function is as follows. Catalyzes the radical-mediated insertion of two sulfur atoms into the C-6 and C-8 positions of the octanoyl moiety bound to the lipoyl domains of lipoate-dependent enzymes, thereby converting the octanoylated domains into lipoylated derivatives. This chain is Lipoyl synthase, found in Chlamydia abortus (strain DSM 27085 / S26/3) (Chlamydophila abortus).